The following is a 397-amino-acid chain: Acetate kinase (397 aa).

Asn-7 provides a ligand contact to Mg(2+). Lys-14 lines the ATP pocket. Substrate is bound at residue Arg-91. Asp-148 acts as the Proton donor/acceptor in catalysis. ATP is bound by residues 208–212, 283–285, and 331–335; these read HLGNG, DFR, and GLGEN. Glu-383 is a Mg(2+) binding site.

It belongs to the acetokinase family. As to quaternary structure, homodimer. The cofactor is Mg(2+). Requires Mn(2+) as cofactor.

It is found in the cytoplasm. The catalysed reaction is acetate + ATP = acetyl phosphate + ADP. Its pathway is metabolic intermediate biosynthesis; acetyl-CoA biosynthesis; acetyl-CoA from acetate: step 1/2. Catalyzes the formation of acetyl phosphate from acetate and ATP. Can also catalyze the reverse reaction. This chain is Acetate kinase, found in Heliobacterium modesticaldum (strain ATCC 51547 / Ice1).